A 313-amino-acid chain; its full sequence is 4-diphosphocytidyl-2-C-methyl-D-erythritol kinase (313 aa).

Residue Lys29 is part of the active site. 113-123 (PMGGGVGGGSS) contributes to the ATP binding site. Residue Asp155 is part of the active site.

Belongs to the GHMP kinase family. IspE subfamily.

It catalyses the reaction 4-CDP-2-C-methyl-D-erythritol + ATP = 4-CDP-2-C-methyl-D-erythritol 2-phosphate + ADP + H(+). It functions in the pathway isoprenoid biosynthesis; isopentenyl diphosphate biosynthesis via DXP pathway; isopentenyl diphosphate from 1-deoxy-D-xylulose 5-phosphate: step 3/6. In terms of biological role, catalyzes the phosphorylation of the position 2 hydroxy group of 4-diphosphocytidyl-2C-methyl-D-erythritol. The chain is 4-diphosphocytidyl-2-C-methyl-D-erythritol kinase from Haemophilus influenzae (strain 86-028NP).